Here is a 282-residue protein sequence, read N- to C-terminus: Putative polysaccharide deacetylase YheN (282 aa).

A helical membrane pass occupies residues 15-35; it reads LAFKFASLAVLCVLLLLMVIL. Residues 85–271 form the NodB homology domain; sequence KTVYLTFDDG…KLKEKGYSFG (187 aa).

Belongs to the polysaccharide deacetylase family.

It is found in the cell membrane. The chain is Putative polysaccharide deacetylase YheN (yheN) from Bacillus subtilis (strain 168).